The sequence spans 329 residues: Calponin-3 (329 aa).

Lys-23 is modified (N6-acetyllysine). In terms of domain architecture, Calponin-homology (CH) spans 26–130 (HQAEEDLRNW…TLVALAGLAK (105 aa)). Lys-158 is subject to N6-methyllysine. Calponin-like repeat units follow at residues 164-189 (IGLQMGTNKCASQAGMTAYGTRRHLY), 204-229 (ISLQMGTNKGASQAGMLAPGTRRDIY), and 243-268 (ISLQMGTNKVASQKGMSVYGLGRQVY). A disordered region spans residues 280-329 (VIHNGSQGTGTNGSEISDSDYQAEYPDEYHGEYQDDYPRDYQYGDQGIDY). Residues 306-318 (DEYHGEYQDDYPR) show a composition bias toward basic and acidic residues.

This sequence belongs to the calponin family.

Functionally, thin filament-associated protein that is implicated in the regulation and modulation of smooth muscle contraction. It is capable of binding to actin, calmodulin and tropomyosin. The interaction of calponin with actin inhibits the actomyosin Mg-ATPase activity. The protein is Calponin-3 (CNN3) of Bos taurus (Bovine).